We begin with the raw amino-acid sequence, 153 residues long: Ribonuclease H (153 aa).

In terms of domain architecture, RNase H type-1 spans 1–141 (MKHIEIYTDG…CDVLARDAAS (141 aa)). Residues D9, E47, D69, and D133 each contribute to the Mg(2+) site.

The protein belongs to the RNase H family. Monomer. Mg(2+) is required as a cofactor.

The protein localises to the cytoplasm. The catalysed reaction is Endonucleolytic cleavage to 5'-phosphomonoester.. In terms of biological role, endonuclease that specifically degrades the RNA of RNA-DNA hybrids. This is Ribonuclease H from Pseudoalteromonas atlantica (strain T6c / ATCC BAA-1087).